A 393-amino-acid chain; its full sequence is NAD(P)H-quinone oxidoreductase subunit H, chloroplastic (393 aa).

This sequence belongs to the complex I 49 kDa subunit family. As to quaternary structure, NDH is composed of at least 16 different subunits, 5 of which are encoded in the nucleus.

The protein resides in the plastid. It is found in the chloroplast thylakoid membrane. The catalysed reaction is a plastoquinone + NADH + (n+1) H(+)(in) = a plastoquinol + NAD(+) + n H(+)(out). It catalyses the reaction a plastoquinone + NADPH + (n+1) H(+)(in) = a plastoquinol + NADP(+) + n H(+)(out). Functionally, NDH shuttles electrons from NAD(P)H:plastoquinone, via FMN and iron-sulfur (Fe-S) centers, to quinones in the photosynthetic chain and possibly in a chloroplast respiratory chain. The immediate electron acceptor for the enzyme in this species is believed to be plastoquinone. Couples the redox reaction to proton translocation, and thus conserves the redox energy in a proton gradient. This Nuphar advena (Common spatterdock) protein is NAD(P)H-quinone oxidoreductase subunit H, chloroplastic.